The primary structure comprises 358 residues: DnaJ homolog subfamily B member 11 (358 aa).

An N-terminal signal peptide occupies residues 1 to 22; that stretch reads MAPQNLSTFCLLLLYLIGAVIA. A J domain is found at 25 to 90; sequence DFYKILGVPR…EKRKQYDTYG (66 aa). Thr-188 is modified (phosphothreonine). Asn-261 carries N-linked (GlcNAc...) asparagine glycosylation.

In terms of assembly, part of a large chaperone multiprotein complex comprising DNAJB11, HSP90B1, HSPA5, HYOU, PDIA2, PDIA4, PDIA6, PPIB, SDF2L1, UGGT1 and very small amounts of ERP29, but not, or at very low levels, CALR nor CANX. Binds to denatured substrates in an ATP-independent manner. Interacts via the J domain with HSPA5 in an ATP-dependent manner. Contains high-mannose Endo H-sensitive carbohydrates. Post-translationally, cys-169, Cys-171, Cys-193 and Cys-196 form intramolecular disulfide bonds. The preferential partner for each Cys is not known.

It localises to the endoplasmic reticulum lumen. Functionally, as a co-chaperone for HSPA5 it is required for proper folding, trafficking or degradation of proteins. Binds directly to both unfolded proteins that are substrates for ERAD and nascent unfolded peptide chains, but dissociates from the HSPA5-unfolded protein complex before folding is completed. May help recruiting HSPA5 and other chaperones to the substrate. Stimulates HSPA5 ATPase activity. It is necessary for maturation and correct trafficking of PKD1. The chain is DnaJ homolog subfamily B member 11 (Dnajb11) from Rattus norvegicus (Rat).